Consider the following 184-residue polypeptide: NADH-quinone oxidoreductase subunit B (184 aa).

[4Fe-4S] cluster is bound by residues cysteine 37, cysteine 38, cysteine 103, and cysteine 132.

It belongs to the complex I 20 kDa subunit family. NDH-1 is composed of 14 different subunits. Subunits NuoB, C, D, E, F, and G constitute the peripheral sector of the complex. Requires [4Fe-4S] cluster as cofactor.

It is found in the cell membrane. The catalysed reaction is a quinone + NADH + 5 H(+)(in) = a quinol + NAD(+) + 4 H(+)(out). In terms of biological role, NDH-1 shuttles electrons from NADH, via FMN and iron-sulfur (Fe-S) centers, to quinones in the respiratory chain. The immediate electron acceptor for the enzyme in this species is believed to be a menaquinone. Couples the redox reaction to proton translocation (for every two electrons transferred, four hydrogen ions are translocated across the cytoplasmic membrane), and thus conserves the redox energy in a proton gradient. This is NADH-quinone oxidoreductase subunit B from Rhodococcus jostii (strain RHA1).